The primary structure comprises 260 residues: Small ribosomal subunit protein uS3 (260 aa).

Residues 39-114 form the KH type-2 domain; sequence LRQYIEQKLG…QIRINVVEVQ (76 aa). The disordered stretch occupies residues 219–260; that stretch reads EVAAPPPSTRDRDRDRGDRDREPRRRQQQRRRQQFEDRSNEG. Composition is skewed to basic and acidic residues over residues 227–243 and 251–260; these read TRDRDRDRGDRDREPRR and QQFEDRSNEG.

It belongs to the universal ribosomal protein uS3 family. As to quaternary structure, part of the 30S ribosomal subunit. Forms a tight complex with proteins S10 and S14.

Its function is as follows. Binds the lower part of the 30S subunit head. Binds mRNA in the 70S ribosome, positioning it for translation. This is Small ribosomal subunit protein uS3 from Trichormus variabilis (strain ATCC 29413 / PCC 7937) (Anabaena variabilis).